A 163-amino-acid polypeptide reads, in one-letter code: Large ribosomal subunit protein uL15 (163 aa).

Residues 27–37 (SGLGKTAGRGQ) are compositionally biased toward gly residues. The interval 27–46 (SGLGKTAGRGQKGQKSRSGV) is disordered.

It belongs to the universal ribosomal protein uL15 family. Part of the 50S ribosomal subunit.

Its function is as follows. Binds to the 23S rRNA. The chain is Large ribosomal subunit protein uL15 from Zymomonas mobilis subsp. mobilis (strain ATCC 31821 / ZM4 / CP4).